Reading from the N-terminus, the 315-residue chain is Methionyl-tRNA formyltransferase (315 aa).

113-116 contributes to the (6S)-5,6,7,8-tetrahydrofolate binding site; it reads SLLP.

It belongs to the Fmt family.

It catalyses the reaction L-methionyl-tRNA(fMet) + (6R)-10-formyltetrahydrofolate = N-formyl-L-methionyl-tRNA(fMet) + (6S)-5,6,7,8-tetrahydrofolate + H(+). Attaches a formyl group to the free amino group of methionyl-tRNA(fMet). The formyl group appears to play a dual role in the initiator identity of N-formylmethionyl-tRNA by promoting its recognition by IF2 and preventing the misappropriation of this tRNA by the elongation apparatus. This Cronobacter sakazakii (strain ATCC BAA-894) (Enterobacter sakazakii) protein is Methionyl-tRNA formyltransferase.